Consider the following 180-residue polypeptide: tRNA-splicing endonuclease (180 aa).

Residues Tyr-117, His-125, and Lys-156 contribute to the active site.

This sequence belongs to the tRNA-intron endonuclease family. Archaeal short subfamily. Homotetramer; although the tetramer contains four active sites, only two participate in the cleavage. Therefore, it should be considered as a dimer of dimers.

The catalysed reaction is pretRNA = a 3'-half-tRNA molecule with a 5'-OH end + a 5'-half-tRNA molecule with a 2',3'-cyclic phosphate end + an intron with a 2',3'-cyclic phosphate and a 5'-hydroxyl terminus.. Functionally, endonuclease that removes tRNA introns. Cleaves pre-tRNA at the 5'- and 3'-splice sites to release the intron. The products are an intron and two tRNA half-molecules bearing 2',3' cyclic phosphate and 5'-OH termini. Recognizes a pseudosymmetric substrate in which 2 bulged loops of 3 bases are separated by a stem of 4 bp. This is tRNA-splicing endonuclease from Sulfurisphaera tokodaii (strain DSM 16993 / JCM 10545 / NBRC 100140 / 7) (Sulfolobus tokodaii).